The chain runs to 833 residues: Leucine--tRNA ligase (833 aa).

The 'HIGH' region motif lies at 41-52 (PYPSGAGLHVGH). The 'KMSKS' region signature appears at 610–614 (KMSKS). Position 613 (Lys613) interacts with ATP.

This sequence belongs to the class-I aminoacyl-tRNA synthetase family.

Its subcellular location is the cytoplasm. It catalyses the reaction tRNA(Leu) + L-leucine + ATP = L-leucyl-tRNA(Leu) + AMP + diphosphate. The sequence is that of Leucine--tRNA ligase from Streptococcus pyogenes serotype M49 (strain NZ131).